The following is a 146-amino-acid chain: Large ribosomal subunit protein uL15 (146 aa).

Positions 1-51 (MKLHELKPAKGSRKVRNRVGRGTSSGNGKTSGRGQKGQKARSGGGVRLGFE) are disordered. Basic residues predominate over residues 10-19 (KGSRKVRNRV). Composition is skewed to gly residues over residues 23–35 (TSSGNGKTSGRGQ) and 42–51 (SGGGVRLGFE).

The protein belongs to the universal ribosomal protein uL15 family. Part of the 50S ribosomal subunit.

Its function is as follows. Binds to the 23S rRNA. This chain is Large ribosomal subunit protein uL15, found in Streptococcus equi subsp. equi (strain 4047).